We begin with the raw amino-acid sequence, 127 residues long: Photosystem II extrinsic protein U (127 aa).

The signal sequence occupies residues 1 to 31 (MSRLFRRLSTLLLCSLLVLGVWLTQPLSVQA).

This sequence belongs to the PsbU family. In terms of assembly, PSII is composed of 1 copy each of membrane proteins PsbA, PsbB, PsbC, PsbD, PsbE, PsbF, PsbH, PsbI, PsbJ, PsbK, PsbL, PsbM, PsbT, PsbX, PsbY, PsbZ, Psb30/Ycf12, peripheral proteins PsbO, CyanoQ (PsbQ), PsbU, PsbV and a large number of cofactors. It forms dimeric complexes.

It is found in the cellular thylakoid membrane. In terms of biological role, one of the extrinsic, lumenal subunits of photosystem II (PSII). PSII is a light-driven water plastoquinone oxidoreductase, using light energy to abstract electrons from H(2)O, generating a proton gradient subsequently used for ATP formation. The extrinsic proteins stabilize the structure of photosystem II oxygen-evolving complex (OEC), the ion environment of oxygen evolution and protect the OEC against heat-induced inactivation. The sequence is that of Photosystem II extrinsic protein U from Synechococcus sp. (strain RCC307).